The following is a 207-amino-acid chain: Large ribosomal subunit protein uL4 (207 aa).

The disordered stretch occupies residues 56–77 (FVSGGGKKPWRQKGTGRARHGS). Basic residues predominate over residues 63–77 (KPWRQKGTGRARHGS).

Belongs to the universal ribosomal protein uL4 family. Part of the 50S ribosomal subunit.

Its function is as follows. One of the primary rRNA binding proteins, this protein initially binds near the 5'-end of the 23S rRNA. It is important during the early stages of 50S assembly. It makes multiple contacts with different domains of the 23S rRNA in the assembled 50S subunit and ribosome. In terms of biological role, forms part of the polypeptide exit tunnel. The polypeptide is Large ribosomal subunit protein uL4 (Phytoplasma australiense).